The primary structure comprises 395 residues: Flavohemoprotein (395 aa).

The Globin domain occupies 1-136 (MLDQQTIATI…LANVFIQRES (136 aa)). Residue histidine 85 coordinates heme b. Residues tyrosine 95 and glutamate 135 each act as charge relay system in the active site. The tract at residues 147-395 (GGWHGIRPFR…YECFGPHKVI (249 aa)) is reductase. Residues 150–255 (HGIRPFRIVA…AAPHGDFYLE (106 aa)) form the FAD-binding FR-type domain. Residues tyrosine 188 and 204–207 (RQYS) contribute to the FAD site. 268–273 (GVGQTP) contacts NADP(+). Residue 388–391 (CFGP) coordinates FAD.

This sequence belongs to the globin family. Two-domain flavohemoproteins subfamily. In the C-terminal section; belongs to the flavoprotein pyridine nucleotide cytochrome reductase family. It depends on heme b as a cofactor. The cofactor is FAD.

It is found in the cytoplasm. The catalysed reaction is 2 nitric oxide + NADPH + 2 O2 = 2 nitrate + NADP(+) + H(+). The enzyme catalyses 2 nitric oxide + NADH + 2 O2 = 2 nitrate + NAD(+) + H(+). Functionally, is involved in NO detoxification in an aerobic process, termed nitric oxide dioxygenase (NOD) reaction that utilizes O(2) and NAD(P)H to convert NO to nitrate, which protects the bacterium from various noxious nitrogen compounds. Therefore, plays a central role in the inducible response to nitrosative stress. The sequence is that of Flavohemoprotein (hmp) from Dickeya dadantii (strain 3937) (Erwinia chrysanthemi (strain 3937)).